Consider the following 575-residue polypeptide: MKSPWRILVVSPLLLLPLHSSTSRAHDNQPGTIRSDHYTCVGCVLVVSVIEQLAQVHNSTVQASMERLCSYLPEEWVLKTACYMMVHVFGADIIKLFDKDVNADVVCHTLEFCKQEPGQPLCHLYPLPKESWKFTLEKARHIVKQSPIMKYTRSGAGICSLPFLAKICQKIKLAIKNSVPIKDVDSDKYSIFPTLRGYHWRGRDCNDSDKTVYPGRRPDNWDAHRDSNCNGIWGVDPKDGIPYEKKFCEGSQPRGIILLGDSAGAHFHIPPEWLTVSQMSVNSFLNLPTAVTNELDWPQLSGTTGFLDSASKIKENSIYLRLRKRNRCNHRDYQNISKNGASSRNVKSLIESLSRNQLLDHPAIVIYAMIGNDVCNGRKTDPVSAMTTPEQLYANVLKMLEALNSHLPTGSHVILYGLAHGAFLWDTLHSRYHPLGQLNKDVTYTQLYSFLGCLQVSPCPGWMSANETLRALTSERAQQLSETLRKIAASKKFTNFNLFYLDFAFQEVVEEWQKMGGQPWELIEAVDGFHPNEVALLLFADQLWEKVQRQWPDVLGKENPFNPQIEEVFGDQGGH.

The N-terminal stretch at methionine 1 to alanine 25 is a signal peptide. Residues histidine 26 to arginine 34 constitute a propeptide that is removed on maturation. The 82-residue stretch at aspartate 36–proline 117 folds into the Saposin B-type domain. The segment at histidine 37–cysteine 69 is important for enzyme activity, localization to cytoplasmic vesicles, and protein stability. 8 disulfide bridges follow: cysteine 40–cysteine 113, cysteine 43–cysteine 107, cysteine 69–cysteine 82, cysteine 122–cysteine 453, cysteine 159–cysteine 168, cysteine 205–cysteine 229, cysteine 248–cysteine 328, and cysteine 375–cysteine 459. A glycan (N-linked (GlcNAc...) asparagine) is linked at asparagine 58. Residues lysine 172–lysine 176 are lipopolysaccharide binding. The Ca(2+) site is built by aspartate 183, aspartate 185, aspartate 187, tyrosine 189, aspartate 204, asparagine 206, aspartate 207, aspartate 209, valine 212, aspartate 222, aspartate 226, asparagine 228, asparagine 230, isoleucine 232, and glutamate 244. The N-linked (GlcNAc...) asparagine glycan is linked to asparagine 206. Serine 262 is a catalytic residue. N-linked (GlcNAc...) asparagine glycosylation occurs at asparagine 466.

As to quaternary structure, heterodimer of the large and small subunits; disulfide-linked. Ca(2+) is required as a cofactor. Cleaved into a large and a small subunit. In terms of processing, the small subunit is N-glycosylated.

The protein resides in the secreted. It localises to the cytoplasmic vesicle. The catalysed reaction is a 3-(acyloxy)acyl derivative of bacterial toxin + H2O = a 3-hydroxyacyl derivative of bacterial toxin + a fatty acid + H(+). In terms of biological role, removes the secondary (acyloxyacyl-linked) fatty acyl chains from the lipid A region of bacterial lipopolysaccharides (LPS). By breaking down LPS, terminates the host response to bacterial infection and prevents prolonged and damaging inflammatory responses. In peritoneal macrophages, seems to be important for recovery from a state of immune tolerance following infection by Gram-negative bacteria. In Oryctolagus cuniculus (Rabbit), this protein is Acyloxyacyl hydrolase.